Reading from the N-terminus, the 182-residue chain is Inner membrane assembly complex subunit 17 (182 aa).

The transit peptide at Met-1–Glu-45 directs the protein to the mitochondrion. Over Ile-46–Pro-107 the chain is Mitochondrial matrix. A helical membrane pass occupies residues Leu-108 to Trp-127. Residues Lys-128–Thr-158 are a coiled coil. Residues Lys-128–Trp-182 lie on the Mitochondrial intermembrane side of the membrane.

Belongs to the INA17 family. As to quaternary structure, component of the inner membrane assembly (INA) complex, composed of INA17 and INA22. Interacts with a subset of F(1)F(0)-ATP synthase subunits of the F(1)-domain and the peripheral stalk.

Its subcellular location is the mitochondrion inner membrane. Component of the INA complex (INAC) that promotes the biogenesis of mitochondrial F(1)F(0)-ATP synthase. INAC facilitates the assembly of the peripheral stalk and promotes the assembly of the catalytic F(1)-domain with the membrane-embedded F(0)-domain. In Saccharomyces cerevisiae (strain YJM789) (Baker's yeast), this protein is Inner membrane assembly complex subunit 17.